Reading from the N-terminus, the 503-residue chain is Cysteine desulfurase, mitochondrial (503 aa).

Residues 1 to 27 (MSNIAPQVLRHASRACSRRLSLSASLV) constitute a mitochondrion transit peptide. Residues 34–50 (RTVTGSGSGGRRYVSGS) show a composition bias toward low complexity. Positions 34–58 (RTVTGSGSGGRRYVSGSQRHNAQAQ) are disordered. Residues 172-173 (AT), Asn254, Gln282, and 302-304 (SGH) each bind pyridoxal 5'-phosphate. An N6-(pyridoxal phosphate)lysine modification is found at Lys305. Position 342 (Thr342) interacts with pyridoxal 5'-phosphate. The active-site Cysteine persulfide intermediate is the Cys427. Position 427 (Cys427) interacts with [2Fe-2S] cluster.

Belongs to the class-V pyridoxal-phosphate-dependent aminotransferase family. NifS/IscS subfamily. The cofactor is pyridoxal 5'-phosphate.

The protein resides in the mitochondrion. The enzyme catalyses (sulfur carrier)-H + L-cysteine = (sulfur carrier)-SH + L-alanine. Catalyzes the removal of elemental sulfur from cysteine to produce alanine. It supplies the inorganic sulfur for iron-sulfur (Fe-S) clusters. Plays a role in both tRNA-processing and mitochondrial metabolism. Involved in the 2-thio-modification of both 5-carboxymethylaminomethyl-2-thiouridine in mitochondrial tRNAs and 5-methoxycarbonylmethyl-2-thiouridine (mcm5s2U) in cytoplasmic tRNAs. This chain is Cysteine desulfurase, mitochondrial, found in Arthroderma benhamiae (strain ATCC MYA-4681 / CBS 112371) (Trichophyton mentagrophytes).